A 1166-amino-acid chain; its full sequence is MEVEKSKYRSEDLDVVEEEADLKKSRRDRDRSNERKKDKGSEKRREKDRRKKRVKSSDSEDDYDRDDDEEREKRKEKERERRRRDKDRVKRRSERRKSSDSEDDVEEEDERDKRRVNEKERGHREHERDRGKDRKRDREREERKDKEREREKDRERREREREEREKERVKERERREREDGERDRREREKERGSRRNRERERSREVGNEESDDDVKRDLKRRRKEGGERKEKEREKSVGRSSRHEDSPKRKSVEDNGEKKEKKTREEELEDEQKKLDEEVEKRRRRVQEWQELKRKKEEAESESKGDADGNEPKAGKAWTLEGESDDEEGHPEEKSETEMDVDEETKPENDGDAKMVDLENETAATVSESGGDGAVDEEEIDPLDAFMNTMVLPEVEKFCNGAPPPAVNDGTLDSKMNGKESGDRPKKGFNKALGRIIQGEDSDSDYSEPKNDDDPSLDEDDEEFMKRVKKTKAEKLSLVDHSKIEYEPFRKNFYIEVKDISRMTQEEVNTYRKELELKVHGKDVPRPIKFWHQTGLTSKILDTMKKLNYEKPMPIQTQALPIIMSGRDCIGVAKTGSGKTLGFVLPMLRHIKDQPPVEAGDGPIGLVMAPTRELVQQIHSDIRKFSKPLGIRCVPVYGGSGVAQQISELKRGTEIVVCTPGRMIDILCTSSGKITNLRRVTFLVMDEADRMFDMGFEPQITRIIQNIRPERQTVLFSATFPRQVETLARKVLNKPVEIQVGGRSVVNKDITQLVEVRPESDRFLRLLELLGEWSEKGKILVFVQSQEKCDALYRDMIKSSYPCLSLHGGKDQTDRESTISDFKNDVCNLLIATSVAARGLDVKELELVVNFDAPNHYEDYVHRVGRTGRAGRKGCAVTFISEDDAKYAPDLVKALELSEQPVPDDLKALADGFMVKVKQGIEQAHGTGYGGSGFKFNEEEEEVRKAAKKAQAKEYGFEEDKSDSEDENDVVRKAGGGEISQQQATFAQIAAIAAAAKAAAAAPVSAPVTANQLLANGGGLAAMPGVLPVTVPTLPSEGAGRAAAMVAAMNLQHNLAKIQADAMPEHYEAELEINDFPQNARWKVTHKETLGPISEWTGAAITTRGQFYPTGRIPGPGERKLYLFIEGPSEKSVKHAKAELKRVLEDITNQAMSSLPGGASGRYSVL.

Composition is skewed to basic and acidic residues over residues 1 to 12 (MEVEKSKYRSED) and 21 to 45 (DLKK…EKRR). Positions 1 to 460 (MEVEKSKYRS…NDDDPSLDED (460 aa)) are disordered. Residues 14–95 (DVVEEEADLK…KDRVKRRSER (82 aa)) adopt a coiled-coil conformation. Residues 59–70 (SEDDYDRDDDEE) show a composition bias toward acidic residues. Residues 80–95 (ERRRRDKDRVKRRSER) are compositionally biased toward basic residues. Over residues 101–110 (SEDDVEEEDE) the composition is skewed to acidic residues. Residues 111–206 (RDKRRVNEKE…RERERSREVG (96 aa)) are compositionally biased toward basic and acidic residues. The stretch at 130–302 (RGKDRKRDRE…KRKKEEAESE (173 aa)) forms a coiled coil. A Phosphoserine modification is found at serine 210. Over residues 224 to 314 (EGGERKEKER…GDADGNEPKA (91 aa)) the composition is skewed to basic and acidic residues. Serine 324 carries the phosphoserine modification. 2 stretches are compositionally biased toward basic and acidic residues: residues 344 to 357 (ETKP…KMVD) and 416 to 426 (MNGKESGDRPK). Positions 529-557 (KFWHQTGLTSKILDTMKKLNYEKPMPIQT) match the Q motif motif. In terms of domain architecture, Helicase ATP-binding spans 560–738 (LPIIMSGRDC…RKVLNKPVEI (179 aa)). Residue 573 to 580 (AKTGSGKT) participates in ATP binding. The DEAD box signature appears at 686–689 (DEAD). The Helicase C-terminal domain maps to 749-910 (DITQLVEVRP…PVPDDLKALA (162 aa)).

This sequence belongs to the DEAD box helicase family. DDX46/PRP5 subfamily.

The protein resides in the nucleus. It carries out the reaction ATP + H2O = ADP + phosphate + H(+). Functionally, helicase required for pre-mRNA splicing, cold-responsive gene regulation and cold tolerance. This chain is DEAD-box ATP-dependent RNA helicase 42 (RH42), found in Arabidopsis thaliana (Mouse-ear cress).